The chain runs to 278 residues: Probable F-box protein At1g14315 (278 aa).

The F-box domain occupies 1–43 (MQLLPHDTVEDILERVPVKSLLRFKSACKQWKLTIESQYFQAK).

The sequence is that of Probable F-box protein At1g14315 from Arabidopsis thaliana (Mouse-ear cress).